A 310-amino-acid chain; its full sequence is GTP-binding protein GTR1 (310 aa).

Positions 15, 18, 19, 20, 21, 35, 41, 64, 126, 129, and 166 each coordinate GTP.

This sequence belongs to the GTR/RAG GTP-binding protein family. In terms of assembly, heterodimer; with GTR2. Component of the GSE complex composed of GTR1, GTR2, SLM4, MEH1 and LTV1. Interacts with GTR2; the interaction is direct. Interacts with TOR1.

The protein localises to the vacuole membrane. It catalyses the reaction GTP + H2O = GDP + phosphate + H(+). Its function is as follows. GTPase involved in activation of the TORC1 signaling pathway, which promotes growth and represses autophagy in nutrient-rich conditions. Also required for TORC1 inactivation during nitrogen starvation. Required for intracellular sorting of GAP1 out of the endosome. Functionally associated with the inorganic phosphate transporter PHO84, and may be involved in regulating its function or localization. The sequence is that of GTP-binding protein GTR1 (GTR1) from Saccharomyces cerevisiae (strain ATCC 204508 / S288c) (Baker's yeast).